Consider the following 249-residue polypeptide: Triosephosphate isomerase (249 aa).

Residues N10 and K12 each coordinate substrate. The Electrophile role is filled by H94. E166 serves as the catalytic Proton acceptor.

The protein belongs to the triosephosphate isomerase family. In terms of assembly, homodimer.

The enzyme catalyses D-glyceraldehyde 3-phosphate = dihydroxyacetone phosphate. Its pathway is carbohydrate biosynthesis; gluconeogenesis. It functions in the pathway carbohydrate degradation; glycolysis; D-glyceraldehyde 3-phosphate from glycerone phosphate: step 1/1. The chain is Triosephosphate isomerase (tpiA) from Emericella nidulans (strain FGSC A4 / ATCC 38163 / CBS 112.46 / NRRL 194 / M139) (Aspergillus nidulans).